A 125-amino-acid chain; its full sequence is Small ribosomal subunit protein uS12c (125 aa).

This sequence belongs to the universal ribosomal protein uS12 family. As to quaternary structure, part of the 30S ribosomal subunit.

It is found in the plastid. It localises to the chloroplast. With S4 and S5 plays an important role in translational accuracy. Located at the interface of the 30S and 50S subunits. The polypeptide is Small ribosomal subunit protein uS12c (rps12) (Nephroselmis olivacea (Green alga)).